The primary structure comprises 478 residues: NADH-quinone oxidoreductase subunit N (478 aa).

Helical transmembrane passes span 8-28, 38-58, 62-82, 106-126, 160-180, 200-220, 234-254, 268-288, 300-320, 322-342, 368-388, 398-418, and 445-465; these read LVLPEVLLAIYAMGVLLFGVW, ILWASAVTMLALALIIGLGTG, AFGGLFIADGFARFSKVVILV, PILIVLAVVGMMMMVSAGDLM, FVLGSLSSGLLLYGASLVYGF, IGLLFGLVFLLAGLAFKVSAV, PTPVTAFFATAPKLAAMALIA, WGQILAALALASMYLGAIAGI, SSISHMGFGLLGLAAGTAAGV, SMLLYMTIYIVMNVGTFAFIL, AFALLVLLFSLAGVPPMLGFF, IGAGFVWVPVAAVVASVIGAF, and FAFLVLAAVAMLGGAINMAGV.

It belongs to the complex I subunit 2 family. In terms of assembly, NDH-1 is composed of 14 different subunits. Subunits NuoA, H, J, K, L, M, N constitute the membrane sector of the complex.

It is found in the cellular chromatophore membrane. It carries out the reaction a quinone + NADH + 5 H(+)(in) = a quinol + NAD(+) + 4 H(+)(out). Functionally, NDH-1 shuttles electrons from NADH, via FMN and iron-sulfur (Fe-S) centers, to quinones in the respiratory chain. The immediate electron acceptor for the enzyme in this species is believed to be ubiquinone. Couples the redox reaction to proton translocation (for every two electrons transferred, four hydrogen ions are translocated across the cytoplasmic membrane), and thus conserves the redox energy in a proton gradient. In Rhodobacter capsulatus (Rhodopseudomonas capsulata), this protein is NADH-quinone oxidoreductase subunit N.